Here is a 336-residue protein sequence, read N- to C-terminus: Dihydroorotate dehydrogenase (quinone) (336 aa).

FMN contacts are provided by residues Ala62–Lys66 and Thr86. Lys66 provides a ligand contact to substrate. Position 111-115 (Asn111–Phe115) interacts with substrate. Residues Asn139 and Asn172 each contribute to the FMN site. Asn172 contributes to the substrate binding site. The active-site Nucleophile is Ser175. Asn177 is a binding site for substrate. FMN is bound by residues Lys217 and Thr245. Asn246–Thr247 contacts substrate. FMN is bound by residues Gly268, Gly297, and Tyr318–Ser319.

This sequence belongs to the dihydroorotate dehydrogenase family. Type 2 subfamily. In terms of assembly, monomer. It depends on FMN as a cofactor.

It localises to the cell membrane. It catalyses the reaction (S)-dihydroorotate + a quinone = orotate + a quinol. It functions in the pathway pyrimidine metabolism; UMP biosynthesis via de novo pathway; orotate from (S)-dihydroorotate (quinone route): step 1/1. Catalyzes the conversion of dihydroorotate to orotate with quinone as electron acceptor. The chain is Dihydroorotate dehydrogenase (quinone) from Salmonella arizonae (strain ATCC BAA-731 / CDC346-86 / RSK2980).